A 315-amino-acid polypeptide reads, in one-letter code: Porphobilinogen deaminase (315 aa).

Position 241 is an S-(dipyrrolylmethanemethyl)cysteine (Cys-241).

The protein belongs to the HMBS family. In terms of assembly, monomer. Requires dipyrromethane as cofactor.

It carries out the reaction 4 porphobilinogen + H2O = hydroxymethylbilane + 4 NH4(+). It participates in porphyrin-containing compound metabolism; protoporphyrin-IX biosynthesis; coproporphyrinogen-III from 5-aminolevulinate: step 2/4. Its function is as follows. Tetrapolymerization of the monopyrrole PBG into the hydroxymethylbilane pre-uroporphyrinogen in several discrete steps. The sequence is that of Porphobilinogen deaminase from Nitratidesulfovibrio vulgaris (strain DP4) (Desulfovibrio vulgaris).